Reading from the N-terminus, the 447-residue chain is Blue-light photoreceptor PHR2 (447 aa).

Over residues 1–14 the composition is skewed to polar residues; that stretch reads MDSSNVEENLNPET. The disordered stretch occupies residues 1–20; it reads MDSSNVEENLNPETKSAEEQ. The Photolyase/cryptochrome alpha/beta domain occupies 115 to 249; that stretch reads RAAVVWFRND…EVKYFWGSTL (135 aa).

The protein belongs to the DNA photolyase class-1 family. Requires FAD as cofactor.

The sequence is that of Blue-light photoreceptor PHR2 (PHR2) from Arabidopsis thaliana (Mouse-ear cress).